A 352-amino-acid chain; its full sequence is Protein MGF 360-9L (352 aa).

Belongs to the asfivirus MGF 360 family. As to quaternary structure, interacts with host STAT1; this interaction mediates STAT1 degradation through apoptosis. Interacts with host STAT2; this interaction mediates STAT2 degradation through the proteasome.

Its subcellular location is the host cytoplasm. Its function is as follows. Plays a role in virus cell tropism, and may be required for efficient virus replication in macrophages. In addition, inhibits IFN-beta-induced IFN-stimulated genes (ISGs) transcription. Mechanistically, degrades host STAT1 and STAT2 through apoptosis and ubiquitin-proteasome pathways respectively. The sequence is that of Protein MGF 360-9L from Ornithodoros (relapsing fever ticks).